A 296-amino-acid polypeptide reads, in one-letter code: Stanniocalcin-2 (296 aa).

The first 24 residues, 1-24 (MCAERLGQFVTLALVFATLDPAQG), serve as a signal peptide directing secretion. The tract at residues 21-44 (PAQGTDSTNPPEGPQDRSSQQKGR) is disordered. Positions 24–44 (GTDSTNPPEGPQDRSSQQKGR) are enriched in polar residues. Asn-73 carries N-linked (GlcNAc...) asparagine glycosylation. A disordered region spans residues 218–296 (PPTAAPEHQP…EQSEYSDIRR (79 aa)). The span at 240 to 258 (RDTDHHLTANRGAKGERGS) shows a compositional bias: basic and acidic residues. Over residues 272 to 282 (GQSAQGPSGSS) the composition is skewed to low complexity.

Belongs to the stanniocalcin family. As to quaternary structure, homodimer; disulfide-linked. In terms of tissue distribution, found in a variety of tissues including skeletal muscle, small intestine, kidney, liver and brain.

Its subcellular location is the secreted. Has an anti-hypocalcemic action on calcium and phosphate homeostasis. In Mus musculus (Mouse), this protein is Stanniocalcin-2 (Stc2).